Here is a 424-residue protein sequence, read N- to C-terminus: MSNTQSFFSQPLAERDALVRGALSKELERQQSQVELIASENIVSRAVLEAQGSVLTNKYAEGYPGKRYYGGCKFADEVESLAIERVKQLFNAGFANVQPHSGAQANGSVMLALTKPGDTVLGMSLDAGGHLTHGAKPALSGKWFNAVQYGVNRESMLIDYDQVEALAKEHKPSLIIAGFSAYPRQLDFARFRAIADSVGAKLMVDMAHIAGVIAAGRHSNPVDYAHVVTSTTHKTLRGPRGGFVLTNHEEIAKKINSAVFPGLQGGPLMHVIAAKAVAFGEAMTSDFRTYIDNVLANAKALGEVLKEGGVDLVTGGTDNHLLLVDLRPKGLKGTQVEQALERAGITCNKNGIPFDTEKPTITSGIRLGAPAATTRGFGVAEFREIGRLILEVFEALRANPEGDAVTEQRVRQQIFALCDRFPIY.

(6S)-5,6,7,8-tetrahydrofolate contacts are provided by residues leucine 125 and 129 to 131; that span reads GHL. Residue lysine 234 is modified to N6-(pyridoxal phosphate)lysine. Glutamate 250 is a (6S)-5,6,7,8-tetrahydrofolate binding site.

This sequence belongs to the SHMT family. Homodimer. Pyridoxal 5'-phosphate is required as a cofactor.

The protein resides in the cytoplasm. The catalysed reaction is (6R)-5,10-methylene-5,6,7,8-tetrahydrofolate + glycine + H2O = (6S)-5,6,7,8-tetrahydrofolate + L-serine. The protein operates within one-carbon metabolism; tetrahydrofolate interconversion. It functions in the pathway amino-acid biosynthesis; glycine biosynthesis; glycine from L-serine: step 1/1. Catalyzes the reversible interconversion of serine and glycine with tetrahydrofolate (THF) serving as the one-carbon carrier. This reaction serves as the major source of one-carbon groups required for the biosynthesis of purines, thymidylate, methionine, and other important biomolecules. Also exhibits THF-independent aldolase activity toward beta-hydroxyamino acids, producing glycine and aldehydes, via a retro-aldol mechanism. The protein is Serine hydroxymethyltransferase 2 of Cupriavidus pinatubonensis (strain JMP 134 / LMG 1197) (Cupriavidus necator (strain JMP 134)).